We begin with the raw amino-acid sequence, 940 residues long: UvrABC system protein A (940 aa).

Residue 33–40 (GVSGSGKS) coordinates ATP. The C4-type zinc finger occupies 252–279 (CPVCGFTVPELEPRLFSFNAPFGSCPDC). ABC transporter domains lie at 309-586 (WYGK…KKSL) and 606-935 (IDKK…QYLK). 639–646 (GVSGSGKS) provides a ligand contact to ATP. A C4-type zinc finger spans residues 738-764 (CEACSGDGIIKIEMHFLPDVYVPCEVC).

Belongs to the ABC transporter superfamily. UvrA family. In terms of assembly, forms a heterotetramer with UvrB during the search for lesions.

The protein localises to the cytoplasm. Functionally, the UvrABC repair system catalyzes the recognition and processing of DNA lesions. UvrA is an ATPase and a DNA-binding protein. A damage recognition complex composed of 2 UvrA and 2 UvrB subunits scans DNA for abnormalities. When the presence of a lesion has been verified by UvrB, the UvrA molecules dissociate. In Lactococcus lactis subsp. lactis (strain IL1403) (Streptococcus lactis), this protein is UvrABC system protein A.